Consider the following 251-residue polypeptide: NADPH-dependent oxidoreductase (251 aa).

Belongs to the flavin oxidoreductase frp family. The cofactor is FMN.

In terms of biological role, reduces FMN, organic nitro compounds and disulfide DTNB. Involved in maintenance of the cellular redox state and the disulfide stress response. This is NADPH-dependent oxidoreductase (nfrA) from Staphylococcus aureus (strain USA300).